The sequence spans 304 residues: Granaticin polyketide synthase bifunctional cyclase/dehydratase (304 aa).

Its pathway is antifungal biosynthesis; monensin biosynthesis. Is needed for correct cyclization of the oligoketide leading to isochromanequinone formation. This chain is Granaticin polyketide synthase bifunctional cyclase/dehydratase, found in Streptomyces virginiae (Streptomyces cinnamonensis).